A 153-amino-acid chain; its full sequence is T cell receptor delta constant (153 aa).

N-linked (GlcNAc...) asparagine glycosylation is present at N14. C20 and C71 are joined by a disulfide. An N-linked (GlcNAc...) asparagine glycan is attached at N77. Over residues 85–102 (FEVKTDSTDHVKPKETEN) the composition is skewed to basic and acidic residues. Residues 85–112 (FEVKTDSTDHVKPKETENTKQPSKSCHK) are disordered. The chain crosses the membrane as a helical span at residues 130 to 152 (LGLRMLFAKTVAVNFLLTAKLFF).

As to quaternary structure, gamma-delta TR is a heterodimer composed of a gamma and delta chain; disulfide-linked. The gamma-delta TR is associated with the transmembrane signaling CD3 coreceptor proteins following the stoichiometry: a single gamma-delta TR heterodimer associates with one CD3D-CD3E heterodimer, one CD3G-CD3E heterodimer and one CD247 homodimer forming a stable octameric structure. Upon activation, gamma-delta TR complex associates with FCER1G to initiate intracellular signaling.

The protein resides in the cell membrane. Functionally, constant region of T cell receptor (TR) delta chain that participates in the antigen recognition. Gamma-delta TRs recognize a variety of self and foreign non-peptide antigens frequently expressed at the epithelial boundaries between the host and external environment, including endogenous lipids presented by MH-like protein CD1D and phosphoantigens presented by butyrophilin-like molecule BTN3A1. Upon antigen recognition induces rapid, innate-like immune responses involved in pathogen clearance and tissue repair. Binding of gamma-delta TR complex to antigen triggers phosphorylation of immunoreceptor tyrosine-based activation motifs (ITAMs) in the CD3 chains by the LCK and FYN kinases, allowing the recruitment, phosphorylation, and activation of ZAP70 that facilitates phosphorylation of the scaffolding proteins LCP2 and LAT. This lead to the formation of a supramolecular signalosome that recruits the phospholipase PLCG1, resulting in calcium mobilization and ERK activation, ultimately leading to T cell expansion and differentiation into effector cells. Gamma-delta TRs are produced through somatic rearrangement of a limited repertoire of variable (V), diversity (D), and joining (J) genes. The potential diversity of gamma-delta TRs is conferred by the unique ability to rearrange (D) genes in tandem and to utilize all three reading frames. The combinatorial diversity is considerably increased by the sequence exonuclease trimming and random nucleotide (N) region additions which occur during the V-(D)-J rearrangements. The chain is T cell receptor delta constant from Homo sapiens (Human).